A 412-amino-acid polypeptide reads, in one-letter code: NF-kappa-B essential modulator (412 aa).

Residues 1 to 48 form a disordered region; that stretch reads MNKHPWKNQLSEMVQPSGGPAEDQDMLGEESSLGKPAMLHLPSEQGTP. Residues 1-197 form a required for interaction with and ubiquitination by MARCHF2 region; that stretch reads MNKHPWKNQL…REVLQQQHSV (197 aa). 2 positions are modified to phosphoserine; by IKKB: serine 31 and serine 43. The interaction with CHUK/IKBKB stretch occupies residues 44–111; sequence EQGTPETLQR…KLVERLSLEK (68 aa). Residues 49–345 are a coiled coil; the sequence is ETLQRCLEEN…LKVGCHESAR (297 aa). Position 68 is a phosphoserine (serine 68). A Phosphoserine; by ATM modification is found at serine 85. Glycyl lysine isopeptide (Lys-Gly) (interchain with G-Cter in ubiquitin) cross-links involve residues lysine 111, lysine 139, lysine 143, lysine 226, and lysine 246. The segment at 150-250 is interaction with TANK; it reads LGELQESQSR…YDSHIKSSKG (101 aa). The interval 242 to 343 is ubiquitin-binding (UBAN); that stretch reads DSHIKSSKGM…NKLKVGCHES (102 aa). Positions 246 to 358 are self-association; it reads KSSKGMQLED…MRKRHVETPQ (113 aa). A required for interaction with TNFAIP3 region spans residues 249-412; the sequence is KGMQLEDLRQ…LQIHVMECIE (164 aa). Residues 250 to 339 are linear polyubiquitin-binding, does not bind to 'Lys-63'-linked polyubiquitin; the sequence is GMQLEDLRQQ…QREFNKLKVG (90 aa). Residue lysine 270 forms a Glycyl lysine isopeptide (Lys-Gly) (interchain with G-Cter in SUMO); alternate linkage. Lysine 270 is covalently cross-linked (Glycyl lysine isopeptide (Lys-Gly) (interchain with G-Cter in ubiquitin); alternate). Glycyl lysine isopeptide (Lys-Gly) (interchain with G-Cter in ubiquitin) cross-links involve residues lysine 276, lysine 278, lysine 285, and lysine 295. Residue lysine 302 forms a Glycyl lysine isopeptide (Lys-Gly) (interchain with G-Cter in SUMO); alternate linkage. A Glycyl lysine isopeptide (Lys-Gly) (interchain with G-Cter in ubiquitin); alternate cross-link involves residue lysine 302. Glycyl lysine isopeptide (Lys-Gly) (interchain with G-Cter in ubiquitin) cross-links involve residues lysine 314, lysine 318, and lysine 319. The interval 315-336 is leucine-zipper; sequence LVEKKEYLQEQLEQLQREFNKL. A Phosphoserine; by IKKB modification is found at serine 369. The interaction with CYLD stretch occupies residues 375-412; it reads SNQRRSPPEEPPDFCCPKCQYQAPDMDTLQIHVMECIE. Residue serine 380 is modified to Phosphoserine. Residues 382 to 412 form a CCHC NOA-type zinc finger; that stretch reads PEEPPDFCCPKCQYQAPDMDTLQIHVMECIE. Residue cysteine 390 coordinates Zn(2+). Lysine 392 participates in a covalent cross-link: Glycyl lysine isopeptide (Lys-Gly) (interchain with G-Cter in ubiquitin). Cysteine 393, histidine 406, and cysteine 410 together coordinate Zn(2+).

In terms of assembly, homodimer; disulfide-linked. Component of the I-kappa-B-kinase (IKK) core complex consisting of CHUK, IKBKB and IKBKG; probably four alpha/CHUK-beta/IKBKB dimers are associated with four gamma/IKBKG subunits. The IKK core complex seems to associate with regulatory or adapter proteins to form a IKK-signalosome holo-complex. The IKK complex associates with TERF2IP/RAP1, leading to promote IKK-mediated phosphorylation of RELA/p65. Part of a complex composed of NCOA2, NCOA3, CHUK/IKKA, IKBKB, IKBKG and CREBBP. Interacts with COPS3, CYLD, NALP2, TRPC4AP and PIDD1. Interacts with ATM; the complex is exported from the nucleus. Interacts with TRAF6. Interacts with IKBKE. Interacts with TANK; the interaction is enhanced by IKBKE and TBK1. Part of a ternary complex consisting of TANK, IKBKB and IKBKG. Interacts with ZFAND5. Interacts with RIPK2. Interacts with TNIP1 and TNFAIP3; TNIP1 facilitates the TNFAIP3-mediated de-ubiquitination of IKBKG. Interacts with TNFAIP3; the interaction is induced by TNF stimulation and by polyubiquitin. Binds (via UBAN region) polyubiquitin; binds both 'Lys-63'-linked and linear polyubiquitin, with higher affinity for linear ubiquitin. Interacts with NLRP10. Interacts with TANK; this interaction increases in response to DNA damage. Interacts with USP10; this interaction increases in response to DNA damage. Interacts with ZC3H12A; this interaction increases in response to DNA damage. Interacts with IFIT5; the interaction synergizes the recruitment of IKK to MAP3K7 and enhances IKK phosphorylation. Interacts with TRIM29; this interaction induces IKBKG/NEMO ubiquitination and proteolytic degradation. Interacts with TRIM13; this interaction leads to IKBKG/NEMO ubiquitination. Interacts with ARFIP2. Interacts with RIPK1. Interacts with (ubiquitinated) BCL10; interaction with polyubiquitinated BCL10 via both 'Lys-63'-linked and linear ubiquitin is required for TCR-induced NF-kappa-B activation. Interacts with MARCHF2; during the late stages of macrophage viral and bacterial infection; the interaction leads to ubiquitination and degradation of IKBKG/NEMO. Phosphorylation at Ser-68 attenuates aminoterminal homodimerization. In terms of processing, polyubiquitinated on Lys-278 via 'Lys-63'-linked ubiquitin; the ubiquitination is mediated downstream of NOD2 and RIPK2 and probably plays a role in signaling by facilitating interactions with ubiquitin domain-containing proteins and activates the NF-kappa-B pathway. Polyubiquitinated on Lys-278 and Lys-302 through 'Lys-63'-linked ubiquitin; the ubiquitination is mediated by BCL10, MALT1 and TRAF6 and probably plays a role in signaling by facilitating interactions with ubiquitin domain-containing proteins and activates the NF-kappa-B pathway. Monoubiquitinated on Lys-270 and Lys-302; promotes nuclear export. Polyubiquitinated through 'Lys-27' by TRIM23; involved in antiviral innate and inflammatory responses. Linear polyubiquitinated on Lys-111, Lys-143, Lys-226, Lys-246, Lys-270, Lys-278, Lys-285, Lys-295, Lys-302 and Lys-319; the head-to-tail polyubiquitination is mediated by the LUBAC complex and plays a key role in NF-kappa-B activation. Deubiquitinated by USP10 in a TANK-dependent and -independent manner, leading to the negative regulation of NF-kappa-B signaling upon DNA damage. Ubiquitinated at Lys-319 by MARCHF2 following bacterial and viral infection which leads to its degradation. Polyubiquitinated via 'Lys-29'-linked ubiquitin; leading to lysosomal degradation. Post-translationally, sumoylated on Lys-270 and Lys-302 with SUMO1; the modification results in phosphorylation of Ser-85 by ATM leading to a replacement of the sumoylation by mono-ubiquitination on these residues. Neddylated by TRIM40, resulting in stabilization of NFKBIA and down-regulation of NF-kappa-B activity.

Its subcellular location is the cytoplasm. It is found in the nucleus. Functionally, regulatory subunit of the IKK core complex which phosphorylates inhibitors of NF-kappa-B thus leading to the dissociation of the inhibitor/NF-kappa-B complex and ultimately the degradation of the inhibitor. Its binding to scaffolding polyubiquitin plays a key role in IKK activation by multiple signaling receptor pathways. Can recognize and bind both 'Lys-63'-linked and linear polyubiquitin upon cell stimulation, with a much highr affinity for linear polyubiquitin. Could be implicated in NF-kappa-B-mediated protection from cytokine toxicity. Essential for viral activation of IRF3. Involved in TLR3- and IFIH1-mediated antiviral innate response; this function requires 'Lys-27'-linked polyubiquitination. The sequence is that of NF-kappa-B essential modulator (Ikbkg) from Mus musculus (Mouse).